The chain runs to 215 residues: Putative glycosyltransferase ALG1L2 (215 aa).

Residues 40–66 (PFRARSEPEDPDTERSAFTERDSGSGL) are disordered. Over residues 43-62 (ARSEPEDPDTERSAFTERDS) the composition is skewed to basic and acidic residues.

It belongs to the glycosyltransferase group 1 family.

In terms of biological role, putative glycosyltransferase. In Homo sapiens (Human), this protein is Putative glycosyltransferase ALG1L2 (ALG1L2).